The following is a 94-amino-acid chain: Integration host factor subunit beta (94 aa).

It belongs to the bacterial histone-like protein family. Heterodimer of an alpha and a beta chain.

In terms of biological role, this protein is one of the two subunits of integration host factor, a specific DNA-binding protein that functions in genetic recombination as well as in transcriptional and translational control. The protein is Integration host factor subunit beta of Xanthobacter autotrophicus (strain ATCC BAA-1158 / Py2).